A 101-amino-acid chain; its full sequence is Apolipoprotein C-III (101 aa).

Positions 1-20 (MQPRMLLIVALVALLASARA) are cleaved as a signal peptide. The residue at position 64 (methionine 64) is a Methionine sulfoxide. The lipid-binding stretch occupies residues 69-101 (KSLKGYWSKFTDKFTGLWESGPEDQLTTPTLEP). Threonine 96 is a glycosylation site (O-linked (GalNAc...) threonine).

It belongs to the apolipoprotein C3 family. In terms of processing, the most abundant glycoforms are characterized by an O-linked disaccharide galactose linked to N-acetylgalactosamine (Gal-GalNAc), further modified with up to 3 sialic acid residues. Less abundant glycoforms are characterized by more complex and fucosylated glycan moieties. O-glycosylated on Thr-96 with a core 1 or possibly core 8 glycan. In terms of tissue distribution, synthesized predominantly in liver and to a lesser degree in intestine.

The protein resides in the secreted. Component of triglyceride-rich very low density lipoproteins (VLDL) and high density lipoproteins (HDL) in plasma. Plays a multifaceted role in triglyceride homeostasis. Intracellularly, promotes hepatic very low density lipoprotein 1 (VLDL1) assembly and secretion; extracellularly, attenuates hydrolysis and clearance of triglyceride-rich lipoproteins (TRLs). Impairs the lipolysis of TRLs by inhibiting lipoprotein lipase and the hepatic uptake of TRLs by remnant receptors. Formed of several curved helices connected via semiflexible hinges, so that it can wrap tightly around the curved micelle surface and easily adapt to the different diameters of its natural binding partners. This chain is Apolipoprotein C-III (Apoc3), found in Rattus norvegicus (Rat).